We begin with the raw amino-acid sequence, 142 residues long: Hemoglobin subunit alpha (142 aa).

The Globin domain occupies 2–142 (VLSAADKTNV…VSTVLTSKYR (141 aa)). S4 carries the phosphoserine modification. The residue at position 8 (K8) is an N6-succinyllysine. T9 carries the post-translational modification Phosphothreonine. K12 bears the N6-succinyllysine mark. The residue at position 17 (K17) is an N6-acetyllysine; alternate. An N6-succinyllysine; alternate modification is found at K17. K41 carries the N6-succinyllysine modification. S50 carries the post-translational modification Phosphoserine. H59 lines the O2 pocket. A heme b-binding site is contributed by H88. S103 carries the post-translational modification Phosphoserine. T109 is subject to Phosphothreonine. S125 carries the phosphoserine modification. Phosphothreonine is present on residues T135 and T138. S139 carries the phosphoserine modification.

Belongs to the globin family. As to quaternary structure, heterotetramer of two alpha chains and two beta chains. In terms of tissue distribution, red blood cells.

Involved in oxygen transport from the lung to the various peripheral tissues. Its function is as follows. Hemopressin acts as an antagonist peptide of the cannabinoid receptor CNR1. Hemopressin-binding efficiently blocks cannabinoid receptor CNR1 and subsequent signaling. This is Hemoglobin subunit alpha (HBA) from Equus zebra (Mountain zebra).